Here is a 162-residue protein sequence, read N- to C-terminus: Selenoprotein F (162 aa).

A signal peptide spans 1-28; that stretch reads MAARRDGWLGPAFGLRLLLATVLQTVSA. A non-standard amino acid (selenocysteine) is located at residue Sec93.

Belongs to the selenoprotein M/F family. As to quaternary structure, forms a tight complex with UGGT1/UGCGL1. Interacts with UGGT2/UGCGL2. Interacts with RDH11.

Its subcellular location is the endoplasmic reticulum lumen. In terms of biological role, may be involved in redox reactions associated with the formation of disulfide bonds. May contribute to the quality control of protein folding in the endoplasmic reticulum. May regulate protein folding by enhancing the catalytic activity of UGGT1/UGCGL1 and UGGT2/UGCGL2. The chain is Selenoprotein F from Bos taurus (Bovine).